A 342-amino-acid polypeptide reads, in one-letter code: Glycerol-3-phosphate dehydrogenase [NAD(P)+] (342 aa).

Residues Ser13, Trp14, and Lys108 each contribute to the NADPH site. 3 residues coordinate sn-glycerol 3-phosphate: Lys108, Gly139, and Ser141. NADPH is bound at residue Ala143. The sn-glycerol 3-phosphate site is built by Lys194, Asp247, Ser257, Arg258, and Asn259. Lys194 (proton acceptor) is an active-site residue. Residue Arg258 participates in NADPH binding. Residues Val282 and Glu284 each coordinate NADPH.

Belongs to the NAD-dependent glycerol-3-phosphate dehydrogenase family.

The protein resides in the cytoplasm. The catalysed reaction is sn-glycerol 3-phosphate + NAD(+) = dihydroxyacetone phosphate + NADH + H(+). It carries out the reaction sn-glycerol 3-phosphate + NADP(+) = dihydroxyacetone phosphate + NADPH + H(+). It participates in membrane lipid metabolism; glycerophospholipid metabolism. In terms of biological role, catalyzes the reduction of the glycolytic intermediate dihydroxyacetone phosphate (DHAP) to sn-glycerol 3-phosphate (G3P), the key precursor for phospholipid synthesis. This is Glycerol-3-phosphate dehydrogenase [NAD(P)+] from Lactococcus lactis subsp. cremoris (strain MG1363).